The primary structure comprises 1220 residues: ATP-dependent helicase/nuclease subunit A (1220 aa).

Residues 9-473 (VIWTDDQWKS…IDLSQNFRSR (465 aa)) form the UvrD-like helicase ATP-binding domain. 30 to 37 (AAAGSGKT) lines the ATP pocket. Positions 474 to 782 (PEVLSTTNYL…RMMTIHASKG (309 aa)) constitute a UvrD-like helicase C-terminal domain.

It belongs to the helicase family. AddA subfamily. In terms of assembly, heterodimer of AddA and AddB/RexB. The cofactor is Mg(2+).

It carries out the reaction Couples ATP hydrolysis with the unwinding of duplex DNA by translocating in the 3'-5' direction.. The catalysed reaction is ATP + H2O = ADP + phosphate + H(+). The heterodimer acts as both an ATP-dependent DNA helicase and an ATP-dependent, dual-direction single-stranded exonuclease. Recognizes the chi site generating a DNA molecule suitable for the initiation of homologous recombination. The AddA nuclease domain is required for chi fragment generation; this subunit has the helicase and 3' -&gt; 5' nuclease activities. The sequence is that of ATP-dependent helicase/nuclease subunit A from Staphylococcus carnosus (strain TM300).